Consider the following 106-residue polypeptide: PAT complex subunit Asterix (106 aa).

The tract at residues 1 to 29 (MSANNMSDPRRPNKVLRYKPPPSECNPAL) is disordered. An N-acetylserine modification is found at serine 2. Residues 2–32 (SANNMSDPRRPNKVLRYKPPPSECNPALDDP) lie on the Cytoplasmic side of the membrane. Residues 33-51 (TPDYMNLLGMIFSMCGLML) form a helical membrane-spanning segment. Position 52 (lysine 52) is a topological domain, lumenal. The helical transmembrane segment at 53 to 70 (LKWCAWVAVYCSFISFAN) threads the bilayer. Topologically, residues 71 to 74 (SRSS) are cytoplasmic. The helical transmembrane segment at 75–95 (EDTKQMMSSFMLSISAVVMSY) threads the bilayer. The Lumenal segment spans residues 96-106 (LQNPQPMTPPW).

Belongs to the Asterix family. In terms of assembly, component of the PAT complex, composed of WDR83OS/Asterix and CCDC47. The PAT complex is part of the multi-pass translocon (MPT) complex, composed of three subcomplexes, the GEL complex (composed of RAB5IF/OPTI and TMCO1), the BOS complex (composed of NCLN/Nicalin, NOMO1 and TMEM147) and the PAT complex (composed of WDR83OS/Asterix and CCDC47). The MPT complex associates with the SEC61 complex.

The protein localises to the endoplasmic reticulum membrane. Functionally, component of the multi-pass translocon (MPT) complex that mediates insertion of multi-pass membrane proteins into the lipid bilayer of membranes. The MPT complex takes over after the SEC61 complex: following membrane insertion of the first few transmembrane segments of proteins by the SEC61 complex, the MPT complex occludes the lateral gate of the SEC61 complex to promote insertion of subsequent transmembrane regions. Within the MPT complex, the PAT subcomplex sequesters any highly polar regions in the transmembrane domains away from the non-polar membrane environment until they can be buried in the interior of the fully assembled protein. Within the PAT subcomplex, WDR83OS/Asterix binds to and redirects the substrate to a location behind the SEC61 complex. The protein is PAT complex subunit Asterix (WDR83OS) of Bos taurus (Bovine).